A 367-amino-acid polypeptide reads, in one-letter code: Flagellar P-ring protein (367 aa).

A signal peptide spans 1 to 22; the sequence is MRRMLVIRWILAIHLIATQVFA.

It belongs to the FlgI family. As to quaternary structure, the basal body constitutes a major portion of the flagellar organelle and consists of four rings (L,P,S, and M) mounted on a central rod.

It localises to the periplasm. The protein localises to the bacterial flagellum basal body. Functionally, assembles around the rod to form the L-ring and probably protects the motor/basal body from shearing forces during rotation. The polypeptide is Flagellar P-ring protein (Legionella pneumophila subsp. pneumophila (strain Philadelphia 1 / ATCC 33152 / DSM 7513)).